Consider the following 439-residue polypeptide: tRNA-2-methylthio-N(6)-dimethylallyladenosine synthase (439 aa).

Residues 2 to 119 (KKLYLKTHGC…LPDLLDSVIQ (118 aa)) form the MTTase N-terminal domain. Positions 11, 48, 82, 156, 160, and 163 each coordinate [4Fe-4S] cluster. In terms of domain architecture, Radical SAM core spans 142–374 (RAEGPSAFVS…QNRINAKAAE (233 aa)). The TRAM domain occupies 377-439 (QSMVGTQQRI…RPYSLWGEIC (63 aa)).

It belongs to the methylthiotransferase family. MiaB subfamily. As to quaternary structure, monomer. The cofactor is [4Fe-4S] cluster.

It localises to the cytoplasm. The catalysed reaction is N(6)-dimethylallyladenosine(37) in tRNA + (sulfur carrier)-SH + AH2 + 2 S-adenosyl-L-methionine = 2-methylsulfanyl-N(6)-dimethylallyladenosine(37) in tRNA + (sulfur carrier)-H + 5'-deoxyadenosine + L-methionine + A + S-adenosyl-L-homocysteine + 2 H(+). Functionally, catalyzes the methylthiolation of N6-(dimethylallyl)adenosine (i(6)A), leading to the formation of 2-methylthio-N6-(dimethylallyl)adenosine (ms(2)i(6)A) at position 37 in tRNAs that read codons beginning with uridine. The chain is tRNA-2-methylthio-N(6)-dimethylallyladenosine synthase from Coxiella burnetii (strain CbuK_Q154) (Coxiella burnetii (strain Q154)).